A 194-amino-acid chain; its full sequence is Fe/S biogenesis protein NfuA (194 aa).

The [4Fe-4S] cluster site is built by C151 and C154.

It belongs to the NfuA family. As to quaternary structure, homodimer. [4Fe-4S] cluster is required as a cofactor.

Functionally, involved in iron-sulfur cluster biogenesis. Binds a 4Fe-4S cluster, can transfer this cluster to apoproteins, and thereby intervenes in the maturation of Fe/S proteins. Could also act as a scaffold/chaperone for damaged Fe/S proteins. The protein is Fe/S biogenesis protein NfuA of Actinobacillus succinogenes (strain ATCC 55618 / DSM 22257 / CCUG 43843 / 130Z).